Reading from the N-terminus, the 69-residue chain is Large ribosomal subunit protein bL32c (69 aa).

It belongs to the bacterial ribosomal protein bL32 family.

It is found in the plastid. It localises to the chloroplast. In Marchantia polymorpha (Common liverwort), this protein is Large ribosomal subunit protein bL32c (rpl32).